A 62-amino-acid polypeptide reads, in one-letter code: Alpha-elapitoxin-Nn2a (62 aa).

Residues 1-20 (LECHNQQSSQTPTTTDCSGG) form a disordered region. Intrachain disulfides connect Cys-3–Cys-24, Cys-17–Cys-41, Cys-43–Cys-54, and Cys-55–Cys-60.

Belongs to the three-finger toxin family. Short-chain subfamily. Type I alpha-neurotoxin sub-subfamily. Expressed by the venom gland.

It localises to the secreted. In terms of biological role, nicotinic acetylcholine receptor antagonist. Binds to muscle nicotinic acetylcholine receptor (nAChR) and inhibits acetylcholine from binding to the receptor, thereby impairing neuromuscular transmission. Produces peripheral paralysis by blocking neuromuscular transmission at the postsynaptic site. Induces concentration-dependent inhibition of indirect twitches and abolishes contractile responses of tissues to exogenous acetylcholine and carbachol, in the chick biventer cervicis nerve-muscle preparation at 100-300 nM (in vitro). Prior incubation of tissues with Indian polyvalent antivenom (1 ml/0.6 mg) prevents the neurotoxic effects at 100 nM (in vitro). Addition of Indian polyvalent antivenom (1 ml/0.6 mg) at the t90 time point does not reverse the neurotoxic effects (in vitro). Displays non-competitive antagonism of concentration-response curves to carbachol, with a pA2 of 8.01 (in vitro). This chain is Alpha-elapitoxin-Nn2a, found in Naja naja (Indian cobra).